A 278-amino-acid chain; its full sequence is Hydroxyethylthiazole kinase (278 aa).

Methionine 48 contributes to the substrate binding site. ATP-binding residues include arginine 124 and threonine 175. Position 202 (glycine 202) interacts with substrate.

The protein belongs to the Thz kinase family. Mg(2+) is required as a cofactor.

It catalyses the reaction 5-(2-hydroxyethyl)-4-methylthiazole + ATP = 4-methyl-5-(2-phosphooxyethyl)-thiazole + ADP + H(+). It functions in the pathway cofactor biosynthesis; thiamine diphosphate biosynthesis; 4-methyl-5-(2-phosphoethyl)-thiazole from 5-(2-hydroxyethyl)-4-methylthiazole: step 1/1. Catalyzes the phosphorylation of the hydroxyl group of 4-methyl-5-beta-hydroxyethylthiazole (THZ). The chain is Hydroxyethylthiazole kinase from Clostridium botulinum (strain Eklund 17B / Type B).